Reading from the N-terminus, the 181-residue chain is tRNA (cytidine(56)-2'-O)-methyltransferase (181 aa).

Residues Leu88, 115 to 119, and 133 to 140 each bind S-adenosyl-L-methionine; these read GGEKV and IGNQPHSE.

The protein belongs to the aTrm56 family. In terms of assembly, homodimer.

Its subcellular location is the cytoplasm. It catalyses the reaction cytidine(56) in tRNA + S-adenosyl-L-methionine = 2'-O-methylcytidine(56) in tRNA + S-adenosyl-L-homocysteine + H(+). In terms of biological role, specifically catalyzes the AdoMet-dependent 2'-O-ribose methylation of cytidine at position 56 in tRNAs. This Thermofilum pendens (strain DSM 2475 / Hrk 5) protein is tRNA (cytidine(56)-2'-O)-methyltransferase.